The following is a 292-amino-acid chain: Peroxisomal 2,4-dienoyl-CoA reductase [(3E)-enoyl-CoA-producing] (292 aa).

A2 carries the N-acetylalanine modification. NADP(+) is bound by residues 35 to 40 (GGGSGI), 60 to 64 (RSLQK), and D86. R60 lines the substrate pocket. An N6-acetyllysine modification is found at K64. Residues R88, F118, and 126–128 (SFN) each bind substrate. K151 carries the N6-acetyllysine modification. NADP(+) contacts are provided by residues K182 and 208–214 (PGAISGT). R219 provides a ligand contact to substrate. Phosphoserine is present on S287. Positions 290 to 292 (AKL) match the Microbody targeting signal motif. K291 carries the post-translational modification N6-acetyllysine.

The protein belongs to the short-chain dehydrogenases/reductases (SDR) family. 2,4-dienoyl-CoA reductase subfamily. Monomer, dimer and oligomer.

Its subcellular location is the peroxisome. It catalyses the reaction a (2E,4Z)-dienoyl-CoA + NADPH + H(+) = a 4,5-saturated-(3E)-enoyl-CoA + NADP(+). The catalysed reaction is a (2E,4E)-dienoyl-CoA + NADPH + H(+) = a 4,5-saturated-(3E)-enoyl-CoA + NADP(+). The enzyme catalyses (2E,4E)-hexadienoyl-CoA + NADPH + H(+) = (3E)-hexenoyl-CoA + NADP(+). It carries out the reaction (2E,4E)-decadienoyl-CoA + NADPH + H(+) = (3E)-decenoyl-CoA + NADP(+). It catalyses the reaction (2E,4Z,7Z,10Z,13Z,16Z,19Z)-docosaheptaenoyl-CoA + NADPH + H(+) = (3E,7Z,10Z,13Z,16Z,19Z)-docosahexaenoyl-CoA + NADP(+). In terms of biological role, auxiliary enzyme of beta-oxidation. Participates in the degradation of unsaturated fatty enoyl-CoA esters having double bonds in both even- and odd-numbered positions in peroxisome. Catalyzes the NADP-dependent reduction of 2,4-dienoyl-CoA to yield trans-3-enoyl-CoA. Has activity towards short and medium chain 2,4-dienoyl-CoAs, but also towards 2,4,7,10,13,16,19-docosaheptaenoyl-CoA, suggesting that it does not constitute a rate limiting step in the peroxisomal degradation of docosahexaenoic acid. The protein is Peroxisomal 2,4-dienoyl-CoA reductase [(3E)-enoyl-CoA-producing] (Decr2) of Mus musculus (Mouse).